The sequence spans 264 residues: Methionine aminopeptidase (264 aa).

Position 79 (His-79) interacts with substrate. A divalent metal cation-binding residues include Asp-97, Asp-108, and His-171. His-178 lines the substrate pocket. The a divalent metal cation site is built by Glu-204 and Glu-235.

It belongs to the peptidase M24A family. Methionine aminopeptidase type 1 subfamily. As to quaternary structure, monomer. It depends on Co(2+) as a cofactor. Requires Zn(2+) as cofactor. The cofactor is Mn(2+). Fe(2+) is required as a cofactor.

The catalysed reaction is Release of N-terminal amino acids, preferentially methionine, from peptides and arylamides.. Functionally, removes the N-terminal methionine from nascent proteins. The N-terminal methionine is often cleaved when the second residue in the primary sequence is small and uncharged (Met-Ala-, Cys, Gly, Pro, Ser, Thr, or Val). Requires deformylation of the N(alpha)-formylated initiator methionine before it can be hydrolyzed. The protein is Methionine aminopeptidase of Escherichia coli O157:H7.